Consider the following 215-residue polypeptide: Nascent polypeptide-associated complex subunit alpha (215 aa).

Positions 1 to 81 are disordered; the sequence is MPGEATETVP…SEKKARKAMS (81 aa). Residues 9–28 show a composition bias toward polar residues; sequence VPATEQELPQPQAETGSGTE. Residues 29 to 42 show a composition bias toward acidic residues; the sequence is SDSDESVPELEEQD. At S43 the chain carries Phosphoserine; by ILK1. Low complexity predominate over residues 44–57; the sequence is TQATTQQAQLAAAA. Residues 69–80 form a required for DNA-binding region; it reads QSRSEKKARKAM. In terms of domain architecture, NAC-A/B spans 70–135; it reads SRSEKKARKA…AKIEDLSQQA (66 aa). An RNA/DNA-binding region spans residues 93 to 108; that stretch reads RVTIRKSKNILFVITK. The residue at position 132 (S132) is a Phosphoserine. Residue K142 is modified to N6-acetyllysine; alternate. Residue K142 forms a Glycyl lysine isopeptide (Lys-Gly) (interchain with G-Cter in SUMO2); alternate linkage. At T159 the chain carries Phosphothreonine; by GSK3-beta. A Phosphothreonine modification is found at T161. 4 positions are modified to phosphoserine: S166, S186, S191, and S203. The UBA domain maps to 176–213; sequence VEVKDIELVMSQANVSRAKAVRALKNNSNDIVNAIMEL.

The protein belongs to the NAC-alpha family. In terms of assembly, part of the nascent polypeptide-associated complex (NAC), which is a heterodimer of NACA and BTF3 (via NAC-A/B domains). NAC associates with ribosomes through the BTF3/NACB subunit and contacts the ribosomal protein L23, which is positioned near the exiting site. Both subunits can contact nascent polypeptide chains. NACA may also form homodimers, and only this form binds DNA. Interacts with TBP and JUN. Phosphorylation of Ser-43 by ILK during cell adhesion may promote nuclear localization. Phosphorylation of Thr-159 by GSK3B may promote proteasome mediated degradation.

It localises to the cytoplasm. The protein localises to the nucleus. Functionally, prevents inappropriate targeting of non-secretory polypeptides to the endoplasmic reticulum (ER). Binds to nascent polypeptide chains as they emerge from the ribosome and blocks their interaction with the signal recognition particle (SRP), which normally targets nascent secretory peptides to the ER. Also reduces the inherent affinity of ribosomes for protein translocation sites in the ER membrane (M sites). May act as a specific coactivator for JUN, binding to DNA and stabilizing the interaction of JUN homodimers with target gene promoters. This is Nascent polypeptide-associated complex subunit alpha (NACA) from Pongo abelii (Sumatran orangutan).